We begin with the raw amino-acid sequence, 278 residues long: Glucosamine-6-phosphate deaminase (278 aa).

D72 (proton acceptor; for enolization step) is an active-site residue. Residue D141 is the For ring-opening step of the active site. Residue H143 is the Proton acceptor; for ring-opening step of the active site. Catalysis depends on E148, which acts as the For ring-opening step.

The protein belongs to the glucosamine/galactosamine-6-phosphate isomerase family. As to quaternary structure, homohexamer.

Its subcellular location is the cytoplasm. It carries out the reaction alpha-D-glucosamine 6-phosphate + H2O = beta-D-fructose 6-phosphate + NH4(+). It participates in nucleotide-sugar biosynthesis; UDP-N-acetyl-alpha-D-glucosamine biosynthesis; alpha-D-glucosamine 6-phosphate from D-fructose 6-phosphate: step 1/1. Catalyzes the reversible conversion of alpha-D-glucosamine 6-phosphate (GlcN-6P) into beta-D-fructose 6-phosphate (Fru-6P) and ammonium ion, a regulatory reaction step in de novo uridine diphosphate-N-acetyl-alpha-D-glucosamine (UDP-GlcNAc) biosynthesis via hexosamine pathway. This chain is Glucosamine-6-phosphate deaminase (Gnpda1), found in Aedes aegypti (Yellowfever mosquito).